Here is a 230-residue protein sequence, read N- to C-terminus: Interleukin-6 (230 aa).

The first 24 residues, Met-1–Gly-24, serve as a signal peptide directing secretion. Cys-96 and Cys-106 are joined by a disulfide. An N-linked (GlcNAc...) asparagine glycan is attached at Asn-100. The segment covering Arg-206–Gly-218 has biased composition (basic and acidic residues). The tract at residues Arg-206–Thr-230 is disordered.

Belongs to the IL-6 superfamily. Component of a hexamer of two molecules each of IL6, IL6R and IL6ST; first binds to IL6R to associate with the signaling subunit IL6ST. Expressed in kidney and spleen. Low expression in liver and gills.

It localises to the secreted. Cytokine with a wide variety of biological functions in immunity, tissue regeneration, and metabolism. Binds to IL6R, then the complex associates to the signaling subunit IL6ST/gp130 to trigger the intracellular IL6-signaling pathway. The interaction with the membrane-bound IL6R and IL6ST stimulates 'classic signaling', whereas the binding of IL6 and soluble IL6R to IL6ST stimulates 'trans-signaling'. Alternatively, 'cluster signaling' occurs when membrane-bound IL6:IL6R complexes on transmitter cells activate IL6ST receptors on neighboring receiver cells. This chain is Interleukin-6 (il6), found in Paralichthys olivaceus (Bastard halibut).